Consider the following 491-residue polypeptide: Argininosuccinate lyase (491 aa).

Belongs to the lyase 1 family. Argininosuccinate lyase subfamily.

The protein localises to the cytoplasm. The catalysed reaction is 2-(N(omega)-L-arginino)succinate = fumarate + L-arginine. The protein operates within amino-acid biosynthesis; L-arginine biosynthesis; L-arginine from L-ornithine and carbamoyl phosphate: step 3/3. The protein is Argininosuccinate lyase of Methanosarcina barkeri (strain Fusaro / DSM 804).